The sequence spans 291 residues: Protease HtpX homolog (291 aa).

Transmembrane regions (helical) follow at residues 4-24 and 39-59; these read ILLFVLTNVAVVAVLGIVASL and GSLLGFALVIGFGGAIISLLI. Position 144 (H144) interacts with Zn(2+). Residue E145 is part of the active site. H148 contributes to the Zn(2+) binding site. 2 consecutive transmembrane segments (helical) span residues 159 to 179 and 199 to 219; these read LIQGVMNTFVVFLSRVIAFAI and ITTVVLDIVLGFAAAIVVAWF. Position 224 (E224) interacts with Zn(2+).

It belongs to the peptidase M48B family. The cofactor is Zn(2+).

The protein resides in the cell inner membrane. This Albidiferax ferrireducens (strain ATCC BAA-621 / DSM 15236 / T118) (Rhodoferax ferrireducens) protein is Protease HtpX homolog.